A 564-amino-acid polypeptide reads, in one-letter code: Pumilio homolog 9 (564 aa).

Positions 222–564 (LEDTVLIGQG…KIFSKTILKK (343 aa)) constitute a PUM-HD domain. Pumilio repeat units follow at residues 249-284 (EIYG…VILL), 285-320 (AIID…LIVS), 321-359 (VLTS…ALVK), 361-396 (GLKP…FVLE), 397-432 (AATK…RLVA), 433-469 (EISR…VQFR), 470-501 (MHYA…EIVR), and 502-539 (ELLC…KLVA).

The protein resides in the cytoplasm. Functionally, sequence-specific RNA-binding protein that regulates translation and mRNA stability by binding the 3'-UTR of target mRNAs. This chain is Pumilio homolog 9 (APUM9), found in Arabidopsis thaliana (Mouse-ear cress).